The sequence spans 474 residues: Protein anachronism (474 aa).

An N-terminal signal peptide occupies residues 1–33 (MASAMRGEKCERSRIRELVLILSLITMAGDSRA). N-linked (GlcNAc...) asparagine glycans are attached at residues asparagine 54, asparagine 62, asparagine 73, asparagine 116, and asparagine 144. The tract at residues 173–195 (NPGQTREHNPGQASTQPISTENP) is disordered. Positions 183 to 195 (GQASTQPISTENP) are enriched in polar residues. Asparagine 342 is a glycosylation site (N-linked (GlcNAc...) asparagine). A compositionally biased stretch (polar residues) spans 359 to 372 (FIESTTSNSPTIDN). The segment at 359-474 (FIESTTSNSP…HHRIPAHKQE (116 aa)) is disordered. Basic residues-rich tracts occupy residues 390 to 400 (LVHHRRHHHNH) and 437 to 474 (NHHR…HKQE).

In terms of tissue distribution, synthesized in some glial cells and secreted.

The protein localises to the secreted. Negatively regulates proliferation of neuronal precursor cells, thereby controlling the timing of postembryonic neurogenesis. This Drosophila melanogaster (Fruit fly) protein is Protein anachronism (ana).